Reading from the N-terminus, the 22-residue chain is Superoxide dismutase [Cu-Zn] 2 (22 aa).

This sequence belongs to the Cu-Zn superoxide dismutase family. In terms of assembly, homodimer. Cu cation is required as a cofactor. The cofactor is Zn(2+). As to expression, dominant isozyme in roots.

The protein resides in the cytoplasm. The enzyme catalyses 2 superoxide + 2 H(+) = H2O2 + O2. Destroys radicals which are normally produced within the cells and which are toxic to biological systems. This chain is Superoxide dismutase [Cu-Zn] 2, found in Picea abies (Norway spruce).